The chain runs to 360 residues: MAIKRSGNSDRPAKNPSSTPGTNAPTLLSPTPTHQEKETSEEKIRPHRLEDYIGQKDLKSILAIAMEAAKTRQDSLDHLLLYGPPGLGKTTISLILASEMGVNCKITAAPALERPRDITGLLINLKPGDILFIDEIHRLNRLTEELLYPAMEDYRLDITIGKGKAARTQSIHLPKFTLIGATTKVGALTSPLRDRFGLIQRLRFYEVDELTLIVLRTAQILDTAVTEEGATEIARRSRGTPRIANRLLRRVRDYMQVKNGTTIDQELASEALDIYQVDKQGLDWIDRLILETMINQFKGGPVGLEAIAASTGEDAKTIEEVYEPYLLQIGFLNRTPRGRVVSAVAYQHLGLTSEEQLSIF.

Residues 1–46 (MAIKRSGNSDRPAKNPSSTPGTNAPTLLSPTPTHQEKETSEEKIRP) are disordered. Positions 13–205 (AKNPSSTPGT…FGLIQRLRFY (193 aa)) are large ATPase domain (RuvB-L). Positions 15-33 (NPSSTPGTNAPTLLSPTPT) are enriched in polar residues. Residues 34–46 (HQEKETSEEKIRP) are compositionally biased toward basic and acidic residues. ATP contacts are provided by residues isoleucine 44, arginine 45, glycine 86, lysine 89, threonine 90, threonine 91, 152–154 (EDY), arginine 195, tyrosine 205, and arginine 242. A Mg(2+)-binding site is contributed by threonine 90. Positions 206–276 (EVDELTLIVL…LASEALDIYQ (71 aa)) are small ATPAse domain (RuvB-S). The tract at residues 279–360 (KQGLDWIDRL…LTSEEQLSIF (82 aa)) is head domain (RuvB-H). The DNA site is built by arginine 334 and arginine 339.

Belongs to the RuvB family. Homohexamer. Forms an RuvA(8)-RuvB(12)-Holliday junction (HJ) complex. HJ DNA is sandwiched between 2 RuvA tetramers; dsDNA enters through RuvA and exits via RuvB. An RuvB hexamer assembles on each DNA strand where it exits the tetramer. Each RuvB hexamer is contacted by two RuvA subunits (via domain III) on 2 adjacent RuvB subunits; this complex drives branch migration. In the full resolvosome a probable DNA-RuvA(4)-RuvB(12)-RuvC(2) complex forms which resolves the HJ.

Its subcellular location is the cytoplasm. It carries out the reaction ATP + H2O = ADP + phosphate + H(+). Functionally, the RuvA-RuvB-RuvC complex processes Holliday junction (HJ) DNA during genetic recombination and DNA repair, while the RuvA-RuvB complex plays an important role in the rescue of blocked DNA replication forks via replication fork reversal (RFR). RuvA specifically binds to HJ cruciform DNA, conferring on it an open structure. The RuvB hexamer acts as an ATP-dependent pump, pulling dsDNA into and through the RuvAB complex. RuvB forms 2 homohexamers on either side of HJ DNA bound by 1 or 2 RuvA tetramers; 4 subunits per hexamer contact DNA at a time. Coordinated motions by a converter formed by DNA-disengaged RuvB subunits stimulates ATP hydrolysis and nucleotide exchange. Immobilization of the converter enables RuvB to convert the ATP-contained energy into a lever motion, pulling 2 nucleotides of DNA out of the RuvA tetramer per ATP hydrolyzed, thus driving DNA branch migration. The RuvB motors rotate together with the DNA substrate, which together with the progressing nucleotide cycle form the mechanistic basis for DNA recombination by continuous HJ branch migration. Branch migration allows RuvC to scan DNA until it finds its consensus sequence, where it cleaves and resolves cruciform DNA. The chain is Holliday junction branch migration complex subunit RuvB from Rippkaea orientalis (strain PCC 8801 / RF-1) (Cyanothece sp. (strain PCC 8801)).